A 175-amino-acid chain; its full sequence is Shikimate kinase (175 aa).

12–19 (GGRASGKS) is a binding site for ATP.

Belongs to the shikimate kinase family.

The protein localises to the cytoplasm. It carries out the reaction shikimate + ATP = 3-phosphoshikimate + ADP + H(+). It functions in the pathway metabolic intermediate biosynthesis; chorismate biosynthesis; chorismate from D-erythrose 4-phosphate and phosphoenolpyruvate: step 5/7. The protein is Shikimate kinase of Nitratidesulfovibrio vulgaris (strain ATCC 29579 / DSM 644 / CCUG 34227 / NCIMB 8303 / VKM B-1760 / Hildenborough) (Desulfovibrio vulgaris).